The chain runs to 373 residues: Cathecol O-methyltransferase 1 (373 aa).

Positions 209, 232, 252, 253, 265, and 266 each coordinate S-adenosyl-L-homocysteine. S-adenosyl-L-methionine is bound at residue Asp232. His279 functions as the Proton acceptor in the catalytic mechanism.

This sequence belongs to the class I-like SAM-binding methyltransferase superfamily. Cation-independent O-methyltransferase family. COMT subfamily.

It catalyses the reaction catechol + S-adenosyl-L-methionine = guaiacol + S-adenosyl-L-homocysteine + H(+). Its function is as follows. O-methyltransferase that catalyzes the conversion of catechol to guaiacol. Involved in the production of guaiacol in fruits. The chain is Cathecol O-methyltransferase 1 from Solanum lycopersicum (Tomato).